We begin with the raw amino-acid sequence, 236 residues long: CHD1 helical C-terminal domain containing protein 1 (236 aa).

The segment at 44–145 (LDQDTFKTCK…SSQPAKFLVT (102 aa)) is CHD1 helical C-terminal domain (CHCT). Residues 184–236 (LSNMQTPGQGSPLPGQPRSQDHVKKDSLRELSQKPKLKRKRIKEAPETPETEP) form a disordered region. Over residues 202-216 (SQDHVKKDSLRELSQ) the composition is skewed to basic and acidic residues.

Its subcellular location is the cytoplasm. It is found in the nucleus. In terms of biological role, may play a role in regulation of apoptosis. This is CHD1 helical C-terminal domain containing protein 1 from Homo sapiens (Human).